Here is a 337-residue protein sequence, read N- to C-terminus: MQVYYDKDADLSLIKGKTVAIIGYGSQGHAHAANLKDSGVNVVIGLRQGSSWKKAEAAGHVVKTVAEATKEADVVMLLLPDETMPAVYHAEVTANLKEGATLAFAHGFNVHYNQIVPRADLDVIMVAPKGPGHTVRSEYKRGGGVPSLIAVYQDNSGKAKDIALSYAAANGGTKGGVIETTFREETETDLFGEQAVLCGGVVELIKAGFETLTEAGYAPEMAYFECLHEMKLIVDLIFEGGIANMNYSISNNAEYGEYVTGPEVVNASSKEAMRNALKRIQTGEYAKMFIQEGNVNYASMTARRRLNADHQVEKVGAQLRAMMPWITANKLVDQDKN.

In terms of domain architecture, KARI N-terminal Rossmann spans 1-180 (MQVYYDKDAD…GGTKGGVIET (180 aa)). Residues 24 to 27 (YGSQ), R47, and S51 contribute to the NADP(+) site. Residue H106 is part of the active site. Residue G132 coordinates NADP(+). The KARI C-terminal knotted domain occupies 181–326 (TFREETETDL…AQLRAMMPWI (146 aa)). Residues D189, E193, E225, and E229 each coordinate Mg(2+). A substrate-binding site is contributed by S250.

This sequence belongs to the ketol-acid reductoisomerase family. Mg(2+) serves as cofactor.

The enzyme catalyses (2R)-2,3-dihydroxy-3-methylbutanoate + NADP(+) = (2S)-2-acetolactate + NADPH + H(+). It carries out the reaction (2R,3R)-2,3-dihydroxy-3-methylpentanoate + NADP(+) = (S)-2-ethyl-2-hydroxy-3-oxobutanoate + NADPH + H(+). It functions in the pathway amino-acid biosynthesis; L-isoleucine biosynthesis; L-isoleucine from 2-oxobutanoate: step 2/4. Its pathway is amino-acid biosynthesis; L-valine biosynthesis; L-valine from pyruvate: step 2/4. Its function is as follows. Involved in the biosynthesis of branched-chain amino acids (BCAA). Catalyzes an alkyl-migration followed by a ketol-acid reduction of (S)-2-acetolactate (S2AL) to yield (R)-2,3-dihydroxy-isovalerate. In the isomerase reaction, S2AL is rearranged via a Mg-dependent methyl migration to produce 3-hydroxy-3-methyl-2-ketobutyrate (HMKB). In the reductase reaction, this 2-ketoacid undergoes a metal-dependent reduction by NADPH to yield (R)-2,3-dihydroxy-isovalerate. This is Ketol-acid reductoisomerase (NADP(+)) from Neisseria meningitidis serogroup C (strain 053442).